The chain runs to 161 residues: Pleiotrophin-A (161 aa).

Positions 1-23 (MRHQHGLFMLALLAFLFVITVLG) are cleaved as a signal peptide. Cystine bridges form between C41–C70, C49–C79, C56–C83, C93–C125, and C103–C135. Chondroitin sulfate binding regions lie at residues 86–93 (KKQFGAEC) and 117–125 (KRALHNAEC). Residues 136 to 161 (GKVTKPKLQESKKKKKEGKNKEKLLD) form a disordered region. Positions 141 to 161 (PKLQESKKKKKEGKNKEKLLD) are chondroitin sulfate A binding.

It belongs to the pleiotrophin family. As to expression, expressed in high levels in brain and eye. Lower levels in bone. In the tailbud embryo stage, it is expressed exclusively in the central nervous system, especially in the hind region of the brain.

The protein localises to the secreted. Secreted growth factor that mediates its signal through cell-surface proteoglycan and non-proteoglycan receptors. Binds cell-surface proteoglycan receptor via their chondroitin sulfate (CS) groups. Thereby regulates many processes like cell proliferation, cell survival, cell growth, cell differentiation and cell migration. Has antibacterial activity against both Gram-positive and Gram-negative bacteria. The sequence is that of Pleiotrophin-A (ptn-a) from Xenopus laevis (African clawed frog).